We begin with the raw amino-acid sequence, 127 residues long: Holo-[acyl-carrier-protein] synthase (127 aa).

Residues Asp8 and Glu56 each coordinate Mg(2+).

The protein belongs to the P-Pant transferase superfamily. AcpS family. It depends on Mg(2+) as a cofactor.

The protein resides in the cytoplasm. The catalysed reaction is apo-[ACP] + CoA = holo-[ACP] + adenosine 3',5'-bisphosphate + H(+). Functionally, transfers the 4'-phosphopantetheine moiety from coenzyme A to a Ser of acyl-carrier-protein. This chain is Holo-[acyl-carrier-protein] synthase, found in Deinococcus deserti (strain DSM 17065 / CIP 109153 / LMG 22923 / VCD115).